The chain runs to 678 residues: UvrABC system protein B (678 aa).

Residues 31–417 (ENLNDGLAHQ…KSGTEIIDQV (387 aa)) form the Helicase ATP-binding domain. 44–51 (GVTGSGKT) lines the ATP pocket. The Beta-hairpin motif lies at 97–120 (YYDYYQPEAYVPSSDTFIEKDASI). The Helicase C-terminal domain maps to 436-602 (QVDDLLSEAR…GLNKKVGELL (167 aa)). Positions 603–625 (DIGQGGSNKSRNKPRSQKAAEPA) are disordered. The region spanning 638-673 (QQQIKKLEQQMYKFAQDLEFEKAAAIRDQLHKLREQ) is the UVR domain.

The protein belongs to the UvrB family. In terms of assembly, forms a heterotetramer with UvrA during the search for lesions. Interacts with UvrC in an incision complex.

It is found in the cytoplasm. Its function is as follows. The UvrABC repair system catalyzes the recognition and processing of DNA lesions. A damage recognition complex composed of 2 UvrA and 2 UvrB subunits scans DNA for abnormalities. Upon binding of the UvrA(2)B(2) complex to a putative damaged site, the DNA wraps around one UvrB monomer. DNA wrap is dependent on ATP binding by UvrB and probably causes local melting of the DNA helix, facilitating insertion of UvrB beta-hairpin between the DNA strands. Then UvrB probes one DNA strand for the presence of a lesion. If a lesion is found the UvrA subunits dissociate and the UvrB-DNA preincision complex is formed. This complex is subsequently bound by UvrC and the second UvrB is released. If no lesion is found, the DNA wraps around the other UvrB subunit that will check the other stand for damage. This is UvrABC system protein B from Mannheimia succiniciproducens (strain KCTC 0769BP / MBEL55E).